A 383-amino-acid polypeptide reads, in one-letter code: Chaperone protein DnaJ (383 aa).

In terms of domain architecture, J spans aspartate 5–glycine 70. The segment at glycine 137–glutamate 215 adopts a CR-type zinc-finger fold. Residues cysteine 150, cysteine 153, cysteine 167, cysteine 170, cysteine 189, cysteine 192, cysteine 203, and cysteine 206 each coordinate Zn(2+). 4 CXXCXGXG motif repeats span residues cysteine 150–glycine 157, cysteine 167–glycine 174, cysteine 189–glycine 196, and cysteine 203–glycine 210.

This sequence belongs to the DnaJ family. As to quaternary structure, homodimer. It depends on Zn(2+) as a cofactor.

Its subcellular location is the cytoplasm. Participates actively in the response to hyperosmotic and heat shock by preventing the aggregation of stress-denatured proteins and by disaggregating proteins, also in an autonomous, DnaK-independent fashion. Unfolded proteins bind initially to DnaJ; upon interaction with the DnaJ-bound protein, DnaK hydrolyzes its bound ATP, resulting in the formation of a stable complex. GrpE releases ADP from DnaK; ATP binding to DnaK triggers the release of the substrate protein, thus completing the reaction cycle. Several rounds of ATP-dependent interactions between DnaJ, DnaK and GrpE are required for fully efficient folding. Also involved, together with DnaK and GrpE, in the DNA replication of plasmids through activation of initiation proteins. The sequence is that of Chaperone protein DnaJ from Paramagnetospirillum magneticum (strain ATCC 700264 / AMB-1) (Magnetospirillum magneticum).